The sequence spans 529 residues: Listeriolysin O (529 aa).

The signal sequence occupies residues 1–24; sequence MKKIMLVFITLILVSLPIAQQTEA. Transmembrane regions (beta stranded) follow at residues 214–227, 234–243, 312–321, and 329–341; these read ESQLIAKFGTAFKA, VNFGAISEGK, STKVKAAFDA, and SGDVELTNIIKNS. The Conserved undecapeptide signature appears at 483-493; sequence ECTGLAWEWWR. Positions 515–516 match the Cholesterol binding motif; the sequence is TL.

It belongs to the cholesterol-dependent cytolysin family. In terms of assembly, homooligomeric pore complex of 35 to 50 subunits; when inserted in the host membrane.

Its subcellular location is the secreted. It is found in the host membrane. It localises to the host cell membrane. With respect to regulation, activity of listeriolysin O is regulated on multiple levels. It should be high in the phagosome, thereby allowing escape of the bacteria from the phagosomal compartment. Then, once inside the host cytosol, the activity must be controlled to prevent lysis of the host plasma membrane and loss of the intracellular environment. A cholesterol-dependent toxin that causes cytolysis by forming pores in cholesterol containing host membranes. After binding to target membranes, the protein undergoes a major conformation change, leading to its insertion in the host membrane and formation of an oligomeric pore complex. Cholesterol is required for binding to host membranes, membrane insertion and pore formation; cholesterol binding is mediated by a Thr-Leu pair in the C-terminus. Acts as a major virulence factor required for the escape of bacteria from phagosomal vacuoles and entry into the host cytosol. Can be reversibly inactivated by oxidation. The protein is Listeriolysin O (hly) of Listeria monocytogenes serotype 4b (strain CLIP80459).